A 127-amino-acid chain; its full sequence is Large ribosomal subunit protein eL32 (127 aa).

Over residues 37–48 the composition is skewed to basic and acidic residues; sequence KWRKPKGTDSKM. Residues 37 to 65 form a disordered region; it reads KWRKPKGTDSKMRVKLKGKARSPSIGWSS.

Belongs to the eukaryotic ribosomal protein eL32 family.

The chain is Large ribosomal subunit protein eL32 from Thermococcus sibiricus (strain DSM 12597 / MM 739).